A 336-amino-acid polypeptide reads, in one-letter code: MRPILLSGHERSLTQVKYNREGDLLFSCSKDHIINVWFTHNGERLGTYNGHNGTVWSVDVDSKSEFMVSGSADNSMRLWKVSTGECLKAWEFPTAIKRVSWSEDDTKIALVTEQRMGHQGAVRVFEINRDGGPQPDEPLLVFNPIGSKAQVVAFSSLDKHLITGHENGKVALWDVNTGEEVASKEKNHIGLITDLQMSADRTYFVTSSKDKSARLYDSRTLEVIKSYQDPQTPLNSAALIPGKPYLLMGGGQEAMAVTTTSARQGHFEIRMWHVVFEEEVSRIKGGFGPCNSIAVHPEGKGYAIGGEDGYVRLHHFDENTFRAKPYGHETEPKELD.

6 WD repeats span residues 8–49 (GHER…GTYN), 50–91 (GHNG…KAWE), 93–135 (PTAI…GPQP), 144–183 (PIGS…EVAS), 187–226 (NHIG…VIKS), and 285–324 (GGFG…FRAK).

Belongs to the eIF-3 subunit I family. In terms of assembly, component of the eukaryotic translation initiation factor 3 (eIF-3) complex.

The protein resides in the cytoplasm. In terms of biological role, component of the eukaryotic translation initiation factor 3 (eIF-3) complex, which is involved in protein synthesis of a specialized repertoire of mRNAs and, together with other initiation factors, stimulates binding of mRNA and methionyl-tRNAi to the 40S ribosome. The eIF-3 complex specifically targets and initiates translation of a subset of mRNAs involved in cell proliferation. The chain is Eukaryotic translation initiation factor 3 subunit I from Puccinia graminis f. sp. tritici (strain CRL 75-36-700-3 / race SCCL) (Black stem rust fungus).